The following is a 143-amino-acid chain: UPF0201 protein Pcal_0593 (143 aa).

Belongs to the UPF0201 family.

In Pyrobaculum calidifontis (strain DSM 21063 / JCM 11548 / VA1), this protein is UPF0201 protein Pcal_0593.